Here is a 309-residue protein sequence, read N- to C-terminus: SERTA domain-containing protein 2 (309 aa).

Disordered stretches follow at residues 1-30 (MLGKGGKRKFDEHEDGLEGKIVSPSDGPSR), 79-114 (EGSLRPAFTPSSQPSNSLSDSYQEAPPPAPHPCDLG), and 175-220 (PTST…MDSL). Positions 8 to 18 (RKFDEHEDGLE) are enriched in basic and acidic residues. One can recognise an SERTA domain in the interval 33-80 (YTLQRQTIFNISLMKLYNHRPLTEPSLQKTVLINNMLRRIQEELKQEG). Low complexity-rich tracts occupy residues 89–99 (SSQPSNSLSDS) and 175–189 (PTSTSTEAAHTAAPE). The segment covering 204-216 (EGPEEGRTDDSRF) has biased composition (basic and acidic residues). The required for transactivation activity stretch occupies residues 230–306 (TGFLTDLTLD…TELDHIMEVL (77 aa)). Residues 233–238 (LTDLTL) carry the Nuclear export signal (NES) motif.

As to quaternary structure, interacts with XPO1; which mediates nuclear export. Interacts with TFDP1; modulates transactivation activity of TFDP1/E2F complexes. Polyubiquitinated, which promotes proteasomal degradation. In terms of tissue distribution, expressed in white and brown adipose tissue.

It is found in the nucleus. The protein localises to the cytoplasm. Acts at E2F-responsive promoters as coregulator to integrate signals provided by PHD- and/or bromodomain-containing transcription factors. May act as coactivator as well as corepressor of E2F1-TFDP1 and E2F4-TFDP1 complexes on E2F consensus binding sites, which would activate or inhibit E2F-target genes expression. Modulates fat storage by down-regulating the expression of key genes involved in adipocyte lipolysis, thermogenesis and oxidative metabolism. The sequence is that of SERTA domain-containing protein 2 (Sertad2) from Mus musculus (Mouse).